A 302-amino-acid polypeptide reads, in one-letter code: Acetyl-coenzyme A carboxylase carboxyl transferase subunit beta (302 aa).

In terms of domain architecture, CoA carboxyltransferase N-terminal spans 25-294; the sequence is VWTKCDSCGQ…PHFDEAAPVS (270 aa). Zn(2+) is bound by residues cysteine 29, cysteine 32, cysteine 48, and cysteine 51. Residues 29 to 51 form a C4-type zinc finger; sequence CDSCGQVLYRAELERNLEVCPKC. Residues 281–302 are disordered; that stretch reads NQPQPHFDEAAPVSEQENQADA.

The protein belongs to the AccD/PCCB family. Acetyl-CoA carboxylase is a heterohexamer composed of biotin carboxyl carrier protein (AccB), biotin carboxylase (AccC) and two subunits each of ACCase subunit alpha (AccA) and ACCase subunit beta (AccD). It depends on Zn(2+) as a cofactor.

The protein resides in the cytoplasm. It carries out the reaction N(6)-carboxybiotinyl-L-lysyl-[protein] + acetyl-CoA = N(6)-biotinyl-L-lysyl-[protein] + malonyl-CoA. The protein operates within lipid metabolism; malonyl-CoA biosynthesis; malonyl-CoA from acetyl-CoA: step 1/1. Functionally, component of the acetyl coenzyme A carboxylase (ACC) complex. Biotin carboxylase (BC) catalyzes the carboxylation of biotin on its carrier protein (BCCP) and then the CO(2) group is transferred by the transcarboxylase to acetyl-CoA to form malonyl-CoA. The protein is Acetyl-coenzyme A carboxylase carboxyl transferase subunit beta of Serratia proteamaculans (strain 568).